The primary structure comprises 188 residues: MAASAFAGAVRAASGILRPLNILASSTYRNCVKNASLISALSTGRFSHIQTPVVSSTPRLTTSERNLTCGHTSVILNRMAPVLPSVLKLPVRSLTYFSARKGKRKTVKAVIDRFLRLHCGLWVRRKAGYKKKLWKKTPARKKRLREFVFCNKTQSKLLDKMTTSFWKRRNWYVDDPYQKYHDRTNLKV.

Belongs to the bacterial ribosomal protein bL35 family. Component of the mitochondrial large ribosomal subunit (mt-LSU). Mature mammalian 55S mitochondrial ribosomes consist of a small (28S) and a large (39S) subunit. The 28S small subunit contains a 12S ribosomal RNA (12S mt-rRNA) and 30 different proteins. The 39S large subunit contains a 16S rRNA (16S mt-rRNA), a copy of mitochondrial valine transfer RNA (mt-tRNA(Val)), which plays an integral structural role, and 52 different proteins.

The protein localises to the mitochondrion. The protein is Large ribosomal subunit protein bL35m (MRPL35) of Homo sapiens (Human).